The following is an 80-amino-acid chain: Large ribosomal subunit protein uL24 (80 aa).

Residues 53–80 (HMKPTQSHPQGSIIEREFPIHASNVKKS) form a disordered region.

This sequence belongs to the universal ribosomal protein uL24 family. In terms of assembly, part of the 50S ribosomal subunit.

Its function is as follows. One of two assembly initiator proteins, it binds directly to the 5'-end of the 23S rRNA, where it nucleates assembly of the 50S subunit. Functionally, one of the proteins that surrounds the polypeptide exit tunnel on the outside of the subunit. This chain is Large ribosomal subunit protein uL24, found in Chlorobium limicola (strain DSM 245 / NBRC 103803 / 6330).